A 276-amino-acid chain; its full sequence is Formamidopyrimidine-DNA glycosylase (276 aa).

Pro-2 acts as the Schiff-base intermediate with DNA in catalysis. Glu-3 serves as the catalytic Proton donor. Lys-58 (proton donor; for beta-elimination activity) is an active-site residue. DNA is bound by residues His-92, Arg-111, and Arg-154. The FPG-type zinc finger occupies 239 to 273; it reads HAYQRTGDPCERCGTPIQRIVVGQRGTHFCPKCQV. Catalysis depends on Arg-263, which acts as the Proton donor; for delta-elimination activity.

It belongs to the FPG family. In terms of assembly, monomer. Zn(2+) serves as cofactor.

The catalysed reaction is Hydrolysis of DNA containing ring-opened 7-methylguanine residues, releasing 2,6-diamino-4-hydroxy-5-(N-methyl)formamidopyrimidine.. The enzyme catalyses 2'-deoxyribonucleotide-(2'-deoxyribose 5'-phosphate)-2'-deoxyribonucleotide-DNA = a 3'-end 2'-deoxyribonucleotide-(2,3-dehydro-2,3-deoxyribose 5'-phosphate)-DNA + a 5'-end 5'-phospho-2'-deoxyribonucleoside-DNA + H(+). Functionally, involved in base excision repair of DNA damaged by oxidation or by mutagenic agents. Acts as a DNA glycosylase that recognizes and removes damaged bases. Has a preference for oxidized purines, such as 7,8-dihydro-8-oxoguanine (8-oxoG). Has AP (apurinic/apyrimidinic) lyase activity and introduces nicks in the DNA strand. Cleaves the DNA backbone by beta-delta elimination to generate a single-strand break at the site of the removed base with both 3'- and 5'-phosphates. This Ligilactobacillus salivarius (strain UCC118) (Lactobacillus salivarius) protein is Formamidopyrimidine-DNA glycosylase.